The sequence spans 351 residues: Phospho-N-acetylmuramoyl-pentapeptide-transferase (351 aa).

10 consecutive transmembrane segments (helical) span residues G3–I23, T51–V71, P76–L96, G113–F133, F152–T172, G181–G201, P223–F243, I250–T270, L275–V295, and F329–M349.

Belongs to the glycosyltransferase 4 family. MraY subfamily. Mg(2+) is required as a cofactor.

It localises to the cell membrane. It catalyses the reaction UDP-N-acetyl-alpha-D-muramoyl-L-alanyl-gamma-D-glutamyl-meso-2,6-diaminopimeloyl-D-alanyl-D-alanine + di-trans,octa-cis-undecaprenyl phosphate = di-trans,octa-cis-undecaprenyl diphospho-N-acetyl-alpha-D-muramoyl-L-alanyl-D-glutamyl-meso-2,6-diaminopimeloyl-D-alanyl-D-alanine + UMP. Its pathway is cell wall biogenesis; peptidoglycan biosynthesis. Functionally, catalyzes the initial step of the lipid cycle reactions in the biosynthesis of the cell wall peptidoglycan: transfers peptidoglycan precursor phospho-MurNAc-pentapeptide from UDP-MurNAc-pentapeptide onto the lipid carrier undecaprenyl phosphate, yielding undecaprenyl-pyrophosphoryl-MurNAc-pentapeptide, known as lipid I. The sequence is that of Phospho-N-acetylmuramoyl-pentapeptide-transferase from Thermobifida fusca (strain YX).